The following is a 500-amino-acid chain: Probable cytochrome P450 514A2 (500 aa).

Residues 4-24 traverse the membrane as a helical segment; the sequence is IYTIILTIIILVLIISIKDLF. Heme is bound at residue Cys-446.

Belongs to the cytochrome P450 family. Heme is required as a cofactor.

It localises to the membrane. The polypeptide is Probable cytochrome P450 514A2 (cyp514A2) (Dictyostelium discoideum (Social amoeba)).